The following is a 706-amino-acid chain: Glutamine-dependent NAD(+) synthetase (706 aa).

One can recognise a CN hydrolase domain in the interval 5–275 (VTVATCALNQ…VEVLTATLDL (271 aa)). The active-site Proton acceptor; for glutaminase activity is the Glu45. The active-site For glutaminase activity is the Lys114. The Nucleophile; for glutaminase activity role is filled by Cys175. Positions 325–706 (YHSPEEEISL…AAPQSLDGVD (382 aa)) are ligase. Residue 355–362 (PLSGGVDS) coordinates ATP. Residue Ser357 is part of the active site.

The protein in the C-terminal section; belongs to the NAD synthetase family. Homohexamer.

The catalysed reaction is deamido-NAD(+) + L-glutamine + ATP + H2O = L-glutamate + AMP + diphosphate + NAD(+) + H(+). The protein operates within cofactor biosynthesis; NAD(+) biosynthesis; NAD(+) from deamido-NAD(+) (L-Gln route): step 1/1. Functionally, catalyzes the final step of the nicotinamide adenine dinucleotide (NAD) de novo synthesis pathway, the ATP-dependent amidation of deamido-NAD using L-glutamine as a nitrogen source. The sequence is that of Glutamine-dependent NAD(+) synthetase (NADSYN1) from Macaca fascicularis (Crab-eating macaque).